The following is a 555-amino-acid chain: Formate--tetrahydrofolate ligase (555 aa).

ATP is bound at residue 65-72 (TPAGEGKS).

Belongs to the formate--tetrahydrofolate ligase family.

The catalysed reaction is (6S)-5,6,7,8-tetrahydrofolate + formate + ATP = (6R)-10-formyltetrahydrofolate + ADP + phosphate. Its pathway is one-carbon metabolism; tetrahydrofolate interconversion. The sequence is that of Formate--tetrahydrofolate ligase from Staphylococcus aureus (strain Mu3 / ATCC 700698).